The following is a 179-amino-acid chain: Large ribosomal subunit protein uL5 (179 aa).

It belongs to the universal ribosomal protein uL5 family. Part of the 50S ribosomal subunit; part of the 5S rRNA/L5/L18/L25 subcomplex. Contacts the 5S rRNA and the P site tRNA. Forms a bridge to the 30S subunit in the 70S ribosome.

Functionally, this is one of the proteins that bind and probably mediate the attachment of the 5S RNA into the large ribosomal subunit, where it forms part of the central protuberance. In the 70S ribosome it contacts protein S13 of the 30S subunit (bridge B1b), connecting the 2 subunits; this bridge is implicated in subunit movement. Contacts the P site tRNA; the 5S rRNA and some of its associated proteins might help stabilize positioning of ribosome-bound tRNAs. This Oceanobacillus iheyensis (strain DSM 14371 / CIP 107618 / JCM 11309 / KCTC 3954 / HTE831) protein is Large ribosomal subunit protein uL5.